Reading from the N-terminus, the 184-residue chain is Photosystem I assembly protein Ycf4 (184 aa).

The next 2 membrane-spanning stretches (helical) occupy residues 22–42 and 57–77; these read FCWAFILFLGSLGFLLVGTSS and IIFFPQGIVMSFYGIAGLFIS.

This sequence belongs to the Ycf4 family.

The protein localises to the plastid. The protein resides in the chloroplast thylakoid membrane. Functionally, seems to be required for the assembly of the photosystem I complex. The sequence is that of Photosystem I assembly protein Ycf4 from Olimarabidopsis pumila (Dwarf rocket).